Consider the following 87-residue polypeptide: Acylphosphatase (87 aa).

The Acylphosphatase-like domain occupies 2–87; sequence RLTALVSGHV…ETGLREFHIY (86 aa). Catalysis depends on residues R17 and N35.

This sequence belongs to the acylphosphatase family.

The enzyme catalyses an acyl phosphate + H2O = a carboxylate + phosphate + H(+). This chain is Acylphosphatase (acyP), found in Deinococcus radiodurans (strain ATCC 13939 / DSM 20539 / JCM 16871 / CCUG 27074 / LMG 4051 / NBRC 15346 / NCIMB 9279 / VKM B-1422 / R1).